The following is a 347-amino-acid chain: UDP-3-O-acylglucosamine N-acyltransferase (347 aa).

Histidine 241 functions as the Proton acceptor in the catalytic mechanism.

The protein belongs to the transferase hexapeptide repeat family. LpxD subfamily. Homotrimer.

The enzyme catalyses a UDP-3-O-[(3R)-3-hydroxyacyl]-alpha-D-glucosamine + a (3R)-hydroxyacyl-[ACP] = a UDP-2-N,3-O-bis[(3R)-3-hydroxyacyl]-alpha-D-glucosamine + holo-[ACP] + H(+). It participates in bacterial outer membrane biogenesis; LPS lipid A biosynthesis. Functionally, catalyzes the N-acylation of UDP-3-O-acylglucosamine using 3-hydroxyacyl-ACP as the acyl donor. Is involved in the biosynthesis of lipid A, a phosphorylated glycolipid that anchors the lipopolysaccharide to the outer membrane of the cell. The protein is UDP-3-O-acylglucosamine N-acyltransferase of Neisseria gonorrhoeae (strain NCCP11945).